Here is a 128-residue protein sequence, read N- to C-terminus: Large ribosomal subunit protein uL18 (128 aa).

Positions 1-36 (MAKRSSLTRRGVSPRAAARARRHMRVRKKVRGTPER) are disordered. Basic residues predominate over residues 18–31 (ARARRHMRVRKKVR).

Belongs to the universal ribosomal protein uL18 family. Part of the 50S ribosomal subunit; part of the 5S rRNA/L5/L18/L25 subcomplex. Contacts the 5S and 23S rRNAs.

This is one of the proteins that bind and probably mediate the attachment of the 5S RNA into the large ribosomal subunit, where it forms part of the central protuberance. This is Large ribosomal subunit protein uL18 from Thermobifida fusca (strain YX).